We begin with the raw amino-acid sequence, 340 residues long: Phosphoribosylformylglycinamidine cyclo-ligase (340 aa).

This sequence belongs to the AIR synthase family.

The protein resides in the cytoplasm. It catalyses the reaction 2-formamido-N(1)-(5-O-phospho-beta-D-ribosyl)acetamidine + ATP = 5-amino-1-(5-phospho-beta-D-ribosyl)imidazole + ADP + phosphate + H(+). It functions in the pathway purine metabolism; IMP biosynthesis via de novo pathway; 5-amino-1-(5-phospho-D-ribosyl)imidazole from N(2)-formyl-N(1)-(5-phospho-D-ribosyl)glycinamide: step 2/2. The polypeptide is Phosphoribosylformylglycinamidine cyclo-ligase (Crocosphaera subtropica (strain ATCC 51142 / BH68) (Cyanothece sp. (strain ATCC 51142))).